A 913-amino-acid chain; its full sequence is WD repeat-containing protein 44 (913 aa).

Positions 1–14 (MASESDTEEFYDAP) are enriched in acidic residues. The segment at 1 to 24 (MASESDTEEFYDAPEDVHLGGGYP) is disordered. A2 is subject to N-acetylalanine. Residues 2-170 (ASESDTEEFY…SSTEQLNVLE (169 aa)) are binding activity. S3 carries the phosphoserine modification. The FFAT-like motif signature appears at 9 to 15 (EFYDAPE). Y11 is modified (phosphotyrosine). 7 positions are modified to phosphoserine: S27, S50, S66, S71, S81, S96, and S126. A coiled-coil region spans residues 119-184 (EESQKAESQN…VLNKEAVEVK (66 aa)). A phosphothreonine mark is found at T158 and T219. The tract at residues 205–348 (AVEEVAPAKP…RPRSNSGREL (144 aa)) is disordered. The segment at 211-257 (PAKPPRHLTPEPDIVASTKKPVPARPPPPTNFPPPRPPPPSRPAPPP) is important for interaction with ARHGAP26 AND ARHGAP10. Over residues 233 to 256 (PARPPPPTNFPPPRPPPPSRPAPP) the composition is skewed to pro residues. At S262 the chain carries Phosphoserine. Basic and acidic residues predominate over residues 262–278 (SELEFETLKTPDIDVPK). T271 is modified (phosphothreonine). Residues 280 to 311 (NITSDSLLTASMASESTVKDSQPSLDLASATS) are compositionally biased toward polar residues. The segment at 334–347 (VMGPQRPRSNSGRE) is important for interaction with RAB11A. Phosphoserine; by PKB/AKT1 occurs at positions 342 and 344. At T349 the chain carries Phosphothreonine. Disordered regions lie at residues 397–424 (SNDA…LKQK) and 459–480 (DEVF…MPYT). Phosphoserine is present on residues S403, S470, S471, and S472. The segment covering 467-476 (DDPSSSDDEG) has biased composition (acidic residues). Y479 carries the phosphotyrosine modification. Residues 509–548 (EHMGAVWTMKFSHCGRLLASAGQDNVVRIWALKNAFDYFN) form a WD 1 repeat. The segment at 557-593 (EGRVSPSPSQESLSSSKSDTDTGVCSGTDEDPDDKNA) is disordered. Phosphoserine is present on residues S561 and S565. Over residues 561–573 (SPSPSQESLSSSK) the composition is skewed to low complexity. WD repeat units lie at residues 605-643 (GHTA…CLCC), 645-685 (QHID…VALW), 690-729 (GQTK…YHTQ), 740-779 (KVGR…LSMK), 784-823 (VNSS…SKFT), and 876-913 (VLDA…KNVS).

In terms of assembly, interacts with the GTP-bound form of RAB11A and RAB11B. Interacts with GRAF1/ARHGAP26 or GRAF2/ARHGAP10; the interaction connects the endoplasmic reticulum (ER) with the endosomal tubule. Interacts (via FFAT-like motif) with VAPA (via MSP domain) or VAPB (via MSP domain); the interaction connects the ER with the endosomal tubule. Does not bind to RAB7, RAB10, RAB14, RAB35 and RAB8A. In terms of processing, phosphorylated by ATK1; the phosphorylation stabilizes its interaction with RAB11A and RAB11B.

It is found in the cytoplasm. Its subcellular location is the cytosol. It localises to the perinuclear region. The protein resides in the endosome membrane. The protein localises to the golgi apparatus. It is found in the trans-Golgi network. Functionally, downstream effector for Rab11 which regulates Rab11 intracellular membrane trafficking functions such as endocytic recycling, intracellular ciliogenesis and protein export. ATK1-mediated phosphorylation of WDR44 induces binding to Rab11 which activates endocytic recycling of transferrin receptor back to the plasma membrane. When bound to Rab11, prevents the formation of the ciliogenic Rab11-Rabin8/RAB3IP-RAB11FIP3 complex, therefore inhibiting preciliary trafficking and ciliogenesis. Participates in neo-synthesized protein export by connecting the endoplasmic reticulum (ER) with the endosomal tubule via direct interactions with the integral ER proteins VAPA or VAPB and the endosomal protein GRAFs (GRAF1/ARHGAP26 or GRAF2/ARHGAP10), which facilitates the transfer of proteins such as E-cadherin, MPP14 and CFTR into a Rab8-Rab10-Rab11-dependent export route. The chain is WD repeat-containing protein 44 from Homo sapiens (Human).